The chain runs to 159 residues: Protein-export protein SecB (159 aa).

It belongs to the SecB family. In terms of assembly, homotetramer, a dimer of dimers. One homotetramer interacts with 1 SecA dimer.

The protein resides in the cytoplasm. In terms of biological role, one of the proteins required for the normal export of preproteins out of the cell cytoplasm. It is a molecular chaperone that binds to a subset of precursor proteins, maintaining them in a translocation-competent state. It also specifically binds to its receptor SecA. This chain is Protein-export protein SecB, found in Pseudomonas fluorescens (strain SBW25).